The primary structure comprises 572 residues: Proline--tRNA ligase (572 aa).

Belongs to the class-II aminoacyl-tRNA synthetase family. ProS type 1 subfamily. As to quaternary structure, homodimer.

Its subcellular location is the cytoplasm. It catalyses the reaction tRNA(Pro) + L-proline + ATP = L-prolyl-tRNA(Pro) + AMP + diphosphate. Catalyzes the attachment of proline to tRNA(Pro) in a two-step reaction: proline is first activated by ATP to form Pro-AMP and then transferred to the acceptor end of tRNA(Pro). As ProRS can inadvertently accommodate and process non-cognate amino acids such as alanine and cysteine, to avoid such errors it has two additional distinct editing activities against alanine. One activity is designated as 'pretransfer' editing and involves the tRNA(Pro)-independent hydrolysis of activated Ala-AMP. The other activity is designated 'posttransfer' editing and involves deacylation of mischarged Ala-tRNA(Pro). The misacylated Cys-tRNA(Pro) is not edited by ProRS. This is Proline--tRNA ligase from Salmonella schwarzengrund (strain CVM19633).